The following is a 261-amino-acid chain: Thioesterase TesA (261 aa).

Active-site residues include S104, D208, and H236.

Belongs to the thioesterase family.

It carries out the reaction a fatty acyl-CoA + H2O = a fatty acid + CoA + H(+). Involved in the synthesis of both phthiocerol dimycocerosates (PDIMs) and phenolic glycolipids (PGLs), which are structurally related lipids non-covalently bound to the outer cell wall layer of M.tuberculosis and are important virulence factors. This Mycobacterium leprae (strain TN) protein is Thioesterase TesA (tesA).